The primary structure comprises 504 residues: Cytochrome P450 2D10 (504 aa).

A glycan (O-linked (GlcNAc) serine) is linked at serine 382. Cysteine 446 contributes to the heme binding site.

The protein belongs to the cytochrome P450 family. It depends on heme as a cofactor.

The protein resides in the endoplasmic reticulum membrane. Its subcellular location is the microsome membrane. It catalyses the reaction an organic molecule + reduced [NADPH--hemoprotein reductase] + O2 = an alcohol + oxidized [NADPH--hemoprotein reductase] + H2O + H(+). In terms of biological role, cytochromes P450 are a group of heme-thiolate monooxygenases. In liver microsomes, this enzyme is involved in an NADPH-dependent electron transport pathway. It oxidizes a variety of structurally unrelated compounds, including steroids, fatty acids, and xenobiotics. The sequence is that of Cytochrome P450 2D10 (Cyp2d10) from Rattus norvegicus (Rat).